A 393-amino-acid polypeptide reads, in one-letter code: NAD(P)H-quinone oxidoreductase subunit H, chloroplastic (393 aa).

It belongs to the complex I 49 kDa subunit family. As to quaternary structure, NDH is composed of at least 16 different subunits, 5 of which are encoded in the nucleus.

It is found in the plastid. It localises to the chloroplast thylakoid membrane. It catalyses the reaction a plastoquinone + NADH + (n+1) H(+)(in) = a plastoquinol + NAD(+) + n H(+)(out). The catalysed reaction is a plastoquinone + NADPH + (n+1) H(+)(in) = a plastoquinol + NADP(+) + n H(+)(out). Its function is as follows. NDH shuttles electrons from NAD(P)H:plastoquinone, via FMN and iron-sulfur (Fe-S) centers, to quinones in the photosynthetic chain and possibly in a chloroplast respiratory chain. The immediate electron acceptor for the enzyme in this species is believed to be plastoquinone. Couples the redox reaction to proton translocation, and thus conserves the redox energy in a proton gradient. This Cucumis sativus (Cucumber) protein is NAD(P)H-quinone oxidoreductase subunit H, chloroplastic.